The following is a 621-amino-acid chain: Type 2 DNA topoisomerase 6 subunit B (621 aa).

ATP contacts are provided by residues Asn-48, Asp-80, 101–102 (SR), 111–118 (GQQGIGIS), and Lys-435.

This sequence belongs to the TOP6B family. In terms of assembly, homodimer. Heterotetramer of two Top6A and two Top6B chains.

The catalysed reaction is ATP-dependent breakage, passage and rejoining of double-stranded DNA.. Functionally, relaxes both positive and negative superturns and exhibits a strong decatenase activity. This Methanosarcina barkeri (strain Fusaro / DSM 804) protein is Type 2 DNA topoisomerase 6 subunit B.